Reading from the N-terminus, the 506-residue chain is Maturase K (506 aa).

It belongs to the intron maturase 2 family. MatK subfamily.

The protein resides in the plastid. Its subcellular location is the chloroplast. Usually encoded in the trnK tRNA gene intron. Probably assists in splicing its own and other chloroplast group II introns. This is Maturase K from Empetrum nigrum (Black crowberry).